Here is a 187-residue protein sequence, read N- to C-terminus: Phosphatidylethanolamine-binding protein 1 (187 aa).

A phosphoserine mark is found at serine 6 and serine 13. The residue at position 42 (threonine 42) is a Phosphothreonine. A phosphoserine mark is found at serine 52, serine 54, serine 98, and serine 153. An interaction with RAF1 region spans residues 93–134 (KGNDISSGTVLSDYVGSGPPKGTGLHRYVWLVYEQDRPLKCD).

This sequence belongs to the phosphatidylethanolamine-binding protein family. As to quaternary structure, has a tendency to form dimers by disulfide cross-linking. Interacts with RAF1 and this interaction is enhanced if RAF1 is phosphorylated on residues 'Ser-338', 'Ser-339', 'Tyr-340' and 'Tyr-341'. Interacts with ALOX15; in response to IL13/interleukin-13, prevents the interaction of PEBP1 with RAF1 to activate the ERK signaling cascade.

The protein resides in the cytoplasm. Binds ATP, opioids and phosphatidylethanolamine. Has lower affinity for phosphatidylinositol and phosphatidylcholine. Serine protease inhibitor which inhibits thrombin, neuropsin and chymotrypsin but not trypsin, tissue type plasminogen activator and elastase. Inhibits the kinase activity of RAF1 by inhibiting its activation and by dissociating the RAF1/MEK complex and acting as a competitive inhibitor of MEK phosphorylation. Functionally, HCNP may be involved in the function of the presynaptic cholinergic neurons of the central nervous system. HCNP increases the production of choline acetyltransferase but not acetylcholinesterase. Seems to be mediated by a specific receptor. The protein is Phosphatidylethanolamine-binding protein 1 (PEBP1) of Pongo abelii (Sumatran orangutan).